Here is a 626-residue protein sequence, read N- to C-terminus: Protein ALEX (626 aa).

4 disordered regions span residues 1-29 (MMARPVDPQRSPDPTFRSSTRHSGKLEPM), 173-223 (TTAH…AAHP), 236-473 (AAPG…APRS), and 556-612 (AASV…NNSR). 2 stretches are compositionally biased toward polar residues: residues 186 to 195 (KSTAAASSRQ) and 255 to 270 (GSTTLPSTWTAPQSRL). Residues 281 to 312 (QIRESEQRDPQLRRKQQRWKEPLMPRREEKYP) are compositionally biased toward basic and acidic residues. Positions 337–346 (QPILTPGQPQ) are enriched in low complexity. Residues 366 to 399 (IPTPGQPLPPQPIPTPGRPLTPQPIPTPGRPLTP) are compositionally biased toward pro residues. Over residues 416 to 435 (RLLRPGQPMSPQLRQTQGLP) the composition is skewed to low complexity. Positions 436–445 (LPQPLLPPGQ) are enriched in pro residues. Basic residues predominate over residues 570–579 (ALSRSRRYPW). Positions 600–611 (RRNAVSSSTNNS) are enriched in polar residues.

This sequence belongs to the ALEX family. In terms of assembly, interacts with the N-terminal region of the XLas isoforms of guanine nucleotide-binding protein G(s) subunit alpha.

It is found in the cell membrane. The protein resides in the cell projection. The protein localises to the ruffle. Its function is as follows. May inhibit the adenylyl cyclase-stimulating activity of guanine nucleotide-binding protein G(s) subunit alpha which is produced from the same locus in a different open reading frame. The protein is Protein ALEX of Homo sapiens (Human).